A 618-amino-acid polypeptide reads, in one-letter code: Grainyhead-like protein 1 homolog (618 aa).

The tract at residues 1-91 is transcription activation; it reads MTQEYDNKRP…EVEHPEPDHS (91 aa). Residues 74-92 are compositionally biased toward basic and acidic residues; that stretch reads RRSSTAKPEVEHPEPDHSK. A disordered region spans residues 74–94; that stretch reads RRSSTAKPEVEHPEPDHSKRN. Thr-208 bears the Phosphothreonine mark. The Grh/CP2 DB domain maps to 248 to 474; sequence SGNNFEYTLE…DLDTQPVLFI (227 aa). Interaction with DNA stretches follow at residues 380-389 and 427-430; these read TDFSSQKGVK and RKIR.

The protein belongs to the grh/CP2 family. Grainyhead subfamily. In terms of assembly, binds DNA as homodimer. Homodimer, also forms heterodimers with GRHL2 or GRHL3. Post-translationally, methylation at Arg-9 and Lys-116 may be involved in regulating transcriptional activation.

It is found in the nucleus. Transcription factor involved in epithelial development. Binds directly to the consensus DNA sequence 5'-AACCGGTT-3'. Important regulator of DSG1 in the context of hair anchorage and epidermal differentiation, participates in the maintenance of the skin barrier. There is no genetic interaction with GRHL3, nor functional cooperativity due to diverse target gene selectivity during epithelia development. May play a role in regulating glucose homeostasis and insulin signaling. This chain is Grainyhead-like protein 1 homolog (GRHL1), found in Pongo abelii (Sumatran orangutan).